A 102-amino-acid polypeptide reads, in one-letter code: Omega-hexatoxin-Hi2a (102 aa).

The signal sequence occupies residues 1-23 (MKFSKLSLTLALILTQALLVVCG). Positions 24-56 (KINEDFMENGLESHALHDEIRKPIDTEKADAER) are excised as a propeptide. Intrachain disulfides connect C61/C75, C68/C81, and C74/C86. L98 is subject to Leucine amide. Positions 100-102 (RAL) are excised as a propeptide.

Belongs to the neurotoxin 15 family. 02 (omega-actx) subfamily. In terms of tissue distribution, expressed by the venom gland.

The protein resides in the secreted. Its function is as follows. Potent inhibitor of insect, but not mammalian, voltage-gated calcium channels (Cav). In Hadronyche infensa (Fraser island funnel-web spider), this protein is Omega-hexatoxin-Hi2a.